The primary structure comprises 366 residues: UDP-N-acetylglucosamine--N-acetylmuramyl-(pentapeptide) pyrophosphoryl-undecaprenol N-acetylglucosamine transferase (366 aa).

UDP-N-acetyl-alpha-D-glucosamine contacts are provided by residues 15–17, Asn127, Arg175, Ser201, Ile255, and Gln300; that span reads TGG.

This sequence belongs to the glycosyltransferase 28 family. MurG subfamily.

The protein localises to the cell inner membrane. It catalyses the reaction di-trans,octa-cis-undecaprenyl diphospho-N-acetyl-alpha-D-muramoyl-L-alanyl-D-glutamyl-meso-2,6-diaminopimeloyl-D-alanyl-D-alanine + UDP-N-acetyl-alpha-D-glucosamine = di-trans,octa-cis-undecaprenyl diphospho-[N-acetyl-alpha-D-glucosaminyl-(1-&gt;4)]-N-acetyl-alpha-D-muramoyl-L-alanyl-D-glutamyl-meso-2,6-diaminopimeloyl-D-alanyl-D-alanine + UDP + H(+). The protein operates within cell wall biogenesis; peptidoglycan biosynthesis. Cell wall formation. Catalyzes the transfer of a GlcNAc subunit on undecaprenyl-pyrophosphoryl-MurNAc-pentapeptide (lipid intermediate I) to form undecaprenyl-pyrophosphoryl-MurNAc-(pentapeptide)GlcNAc (lipid intermediate II). The chain is UDP-N-acetylglucosamine--N-acetylmuramyl-(pentapeptide) pyrophosphoryl-undecaprenol N-acetylglucosamine transferase from Thiobacillus denitrificans (strain ATCC 25259 / T1).